Reading from the N-terminus, the 241-residue chain is Small ribosomal subunit protein eS4 (241 aa).

One can recognise an S4 RNA-binding domain in the interval 43-105 (IPLVMVLRDI…INKTFRVLQD (63 aa)).

It belongs to the eukaryotic ribosomal protein eS4 family.

In Methanosphaera stadtmanae (strain ATCC 43021 / DSM 3091 / JCM 11832 / MCB-3), this protein is Small ribosomal subunit protein eS4.